Consider the following 404-residue polypeptide: Phosphoglycerate kinase (404 aa).

Substrate contacts are provided by residues 22 to 24, Arg37, 60 to 63, Arg120, and Arg160; these read DFN and HLGR. ATP contacts are provided by residues Lys215, Glu333, and 360-363; that span reads GGDS.

The protein belongs to the phosphoglycerate kinase family. Monomer.

It localises to the cytoplasm. The enzyme catalyses (2R)-3-phosphoglycerate + ATP = (2R)-3-phospho-glyceroyl phosphate + ADP. It participates in carbohydrate degradation; glycolysis; pyruvate from D-glyceraldehyde 3-phosphate: step 2/5. This is Phosphoglycerate kinase from Latilactobacillus sakei subsp. sakei (strain 23K) (Lactobacillus sakei subsp. sakei).